Reading from the N-terminus, the 281-residue chain is NADPH-dependent 7-cyano-7-deazaguanine reductase (281 aa).

81–83 (VES) lines the substrate pocket. 83 to 84 (SK) is an NADPH binding site. Cys-188 (thioimide intermediate) is an active-site residue. The active-site Proton donor is Asp-195. A substrate-binding site is contributed by 227 to 228 (HE). 256–257 (RG) serves as a coordination point for NADPH.

Belongs to the GTP cyclohydrolase I family. QueF type 2 subfamily. As to quaternary structure, homodimer.

The protein localises to the cytoplasm. It carries out the reaction 7-aminomethyl-7-carbaguanine + 2 NADP(+) = 7-cyano-7-deazaguanine + 2 NADPH + 3 H(+). Its pathway is tRNA modification; tRNA-queuosine biosynthesis. Functionally, catalyzes the NADPH-dependent reduction of 7-cyano-7-deazaguanine (preQ0) to 7-aminomethyl-7-deazaguanine (preQ1). This chain is NADPH-dependent 7-cyano-7-deazaguanine reductase, found in Acidovorax ebreus (strain TPSY) (Diaphorobacter sp. (strain TPSY)).